An 805-amino-acid chain; its full sequence is Replication restart protein PriA (805 aa).

A 3'BD region spans residues 1–110 (MNFAEVIVDV…QAMLPAALKA (110 aa)). The linker stretch occupies residues 111 to 166 (KYEKELKIAHGADLPPQVERLFSETKTLLYSDIPDHETLKLIQRHVQKGDIDVTYK). Positions 167–253 (VAQKTNKKMV…KESYEEVYRD (87 aa)) are WH. The 167-residue stretch at 282-448 (TLDSDEHKVF…QKGVYELLSL (167 aa)) folds into the Helicase ATP-binding domain. 295 to 302 (GVTGSGKT) contributes to the ATP binding site. A DEAH box motif is present at residues 391–394 (DEEH). Positions 510, 513, 519, 522, 537, 540, 550, and 553 each coordinate Zn(2+). The 155-residue stretch at 545–699 (PVPHTCPECA…TFYQHEMAHR (155 aa)) folds into the Helicase C-terminal domain.

The protein belongs to the helicase family. PriA subfamily. As to quaternary structure, monomer. Component of the replication restart primosome which assembles in this order; PriA, DnaD then DnaB. The preferred DNA substrate mimics an arrested DNA replication fork with unreplicated lagging strand. Interacts with DnaD but not DnaB. Interacts with SSB (sbbA) via the latter's 35 residue C-terminal tail which tethers PriA to ssDNA. Colocalizes with DNA pol III subunit gamma/tau (dnaX). May interact with RarA. It depends on Zn(2+) as a cofactor.

The protein localises to the cytoplasm. It is found in the nucleoid. The enzyme catalyses Couples ATP hydrolysis with the unwinding of duplex DNA by translocating in the 3'-5' direction.. It catalyses the reaction ATP + H2O = ADP + phosphate + H(+). Functionally, initiates the restart of stalled replication forks, which reloads the replicative helicase on sites other than the origin of replication. Recognizes and binds to abandoned replication forks and remodels them to uncover a helicase loading site. Promotes assembly of the primosome at these replication forks. Serves as the initiating protein for assembly of the replication restart primosome; binding of PriA to an arrested DNA replication fork with unreplicated lagging strand triggers assembly. Sequentially DnaD (possibly as a dimer) and DnaB homotetramers bind. Assembly probably continues by loading of the DnaC replicative helicase aided by helicase loader DnaI. A single-strand (ss)DNA-dependent ATPase with helicase activity. Recognizes and binds the arrested nascent DNA chain at stalled replication forks. Binds forked DNA substrates and makes a larger complex with RarA; RarA has no effect on the helicase function. Binds ssDNA, D-loops and replication fork-like substrates but not double-stranded (ds)DNA; the preferred DNA substrate mimics an arrested DNA replication fork with an unreplicated lagging strand. Recognizes nicked dsDNA. A supershift on ssDNA occurs in the presence of single-stranded binding protein (SSB). Cannot substitute for E.coli PriA. Its function is as follows. Required for replication of plasmids that have a rolling circle mechanism, which produces circular single-stranded (ss)DNA intermediates corresponding to the lagging strand template, which are then converted into double-stranded (ds)DNA; priA is required to activate the conversion of ssDNA into dsDNA. This Bacillus subtilis (strain 168) protein is Replication restart protein PriA.